Here is a 78-residue protein sequence, read N- to C-terminus: DNA-directed RNA polymerase subunit omega (78 aa).

It belongs to the RNA polymerase subunit omega family. In cyanobacteria the RNAP catalytic core is composed of 2 alpha, 1 beta, 1 beta', 1 gamma and 1 omega subunit. When a sigma factor is associated with the core the holoenzyme is formed, which can initiate transcription.

The enzyme catalyses RNA(n) + a ribonucleoside 5'-triphosphate = RNA(n+1) + diphosphate. Promotes RNA polymerase assembly. Latches the N- and C-terminal regions of the beta' subunit thereby facilitating its interaction with the beta and alpha subunits. This Prochlorococcus marinus (strain AS9601) protein is DNA-directed RNA polymerase subunit omega.